The primary structure comprises 204 residues: Elongation factor Ts (204 aa).

Residues threonine 80–valine 83 are involved in Mg(2+) ion dislocation from EF-Tu.

This sequence belongs to the EF-Ts family.

It localises to the cytoplasm. Associates with the EF-Tu.GDP complex and induces the exchange of GDP to GTP. It remains bound to the aminoacyl-tRNA.EF-Tu.GTP complex up to the GTP hydrolysis stage on the ribosome. The protein is Elongation factor Ts of Caldicellulosiruptor saccharolyticus (strain ATCC 43494 / DSM 8903 / Tp8T 6331).